We begin with the raw amino-acid sequence, 484 residues long: Major extracellular endoglucanase (484 aa).

The first 25 residues, 1–25 (MSIFRTASTLALATALALAAGPAFS), serve as a signal peptide directing secretion. The active-site Proton donor is E182. The Nucleophile role is filled by E303. Positions 370–402 (GTAGNTTPTPTPTPTPTPTPTPTPTPTPTPGTS) are disordered. The segment at 375 to 399 (TTPTPTPTPTPTPTPTPTPTPTPTP) is thr-Pro repeats ('hinge') (Pro-Thr box). Positions 378 to 398 (TPTPTPTPTPTPTPTPTPTPT) are enriched in pro residues. Residues 395 to 484 (PTPTPGTSTF…TAEFGFCAAS (90 aa)) enclose the CBM2 domain.

The protein belongs to the glycosyl hydrolase 5 (cellulase A) family.

It catalyses the reaction Endohydrolysis of (1-&gt;4)-beta-D-glucosidic linkages in cellulose, lichenin and cereal beta-D-glucans.. In Xanthomonas campestris pv. campestris (strain ATCC 33913 / DSM 3586 / NCPPB 528 / LMG 568 / P 25), this protein is Major extracellular endoglucanase (engXCA).